Reading from the N-terminus, the 378-residue chain is Erythronate-4-phosphate dehydrogenase (378 aa).

2 residues coordinate substrate: serine 45 and threonine 66. Residues aspartate 146 and threonine 175 each coordinate NAD(+). Arginine 208 is a catalytic residue. Aspartate 232 is a binding site for NAD(+). Residue glutamate 237 is part of the active site. Catalysis depends on histidine 254, which acts as the Proton donor. Glycine 257 contacts NAD(+). Residue tyrosine 258 participates in substrate binding.

It belongs to the D-isomer specific 2-hydroxyacid dehydrogenase family. PdxB subfamily. Homodimer.

It is found in the cytoplasm. The enzyme catalyses 4-phospho-D-erythronate + NAD(+) = (R)-3-hydroxy-2-oxo-4-phosphooxybutanoate + NADH + H(+). It functions in the pathway cofactor biosynthesis; pyridoxine 5'-phosphate biosynthesis; pyridoxine 5'-phosphate from D-erythrose 4-phosphate: step 2/5. Functionally, catalyzes the oxidation of erythronate-4-phosphate to 3-hydroxy-2-oxo-4-phosphonooxybutanoate. This Escherichia coli O6:H1 (strain CFT073 / ATCC 700928 / UPEC) protein is Erythronate-4-phosphate dehydrogenase.